A 346-amino-acid chain; its full sequence is MVRFEGISKTYPAYRGKPGVNALQDIDFAIPRGSITGVIGRSGAGKSSLVRLINGLEKPTTGRVIVDNKDISALAGRELRLAQRSIGMIFQHFNLLSSRTAADNIALPLEIAGWARADIKARVAELLALVGIADKHDRYPSELSGGQKQRVGIARALATRPSVLLSDEATSALDPQTTRAILDLLANINRELGVTIVLITHEMSVVRQLAREVVVLDAGHVVESGHVADIFTHPKHPITQSFLAEVVGDSLPVSLASRIVSEPSAGGQAVIRVQVRGAGAGDTVVARLARELGLDVALLAARIDEIGGQHVGSLVLGVPGSEDVQARVLAWLSQYQFPAERLGYVA.

In terms of domain architecture, ABC transporter spans 2–243 (VRFEGISKTY…PKHPITQSFL (242 aa)). 40 to 47 (GRSGAGKS) lines the ATP pocket.

Belongs to the ABC transporter superfamily. Methionine importer (TC 3.A.1.24) family. The complex is composed of two ATP-binding proteins (MetN), two transmembrane proteins (MetI) and a solute-binding protein (MetQ).

Its subcellular location is the cell inner membrane. It catalyses the reaction L-methionine(out) + ATP + H2O = L-methionine(in) + ADP + phosphate + H(+). The enzyme catalyses D-methionine(out) + ATP + H2O = D-methionine(in) + ADP + phosphate + H(+). Functionally, part of the ABC transporter complex MetNIQ involved in methionine import. Responsible for energy coupling to the transport system. The protein is Methionine import ATP-binding protein MetN of Bradyrhizobium diazoefficiens (strain JCM 10833 / BCRC 13528 / IAM 13628 / NBRC 14792 / USDA 110).